The following is a 191-amino-acid chain: Uridylate kinase (191 aa).

12–17 contacts ATP; it reads GAGKGT. Residues 33–63 form an NMP region; that stretch reads SAGDCLREEQNRPGSKYGNLIKEYIKDGKIV. Residues Arg-39, 61–63, 91–94, and Gln-98 contribute to the a ribonucleoside 5'-phosphate site; these read KIV and GFPR. Residues 128-138 are LID; the sequence is HRGKTSGRSDD. Arg-129 contributes to the ATP binding site. Residues Arg-135 and Arg-146 each coordinate a ribonucleoside 5'-phosphate. An ATP-binding site is contributed by Gln-174.

The protein belongs to the adenylate kinase family. UMP-CMP kinase subfamily. In terms of assembly, monomer. Requires Mg(2+) as cofactor.

Its subcellular location is the cytoplasm. The protein resides in the nucleus. It carries out the reaction UMP + ATP = UDP + ADP. In terms of biological role, catalyzes the phosphorylation of pyrimidine nucleoside monophosphates at the expense of ATP. Plays an important role in de novo pyrimidine nucleotide biosynthesis. Has preference for UMP and dUMP as phosphate acceptors, but can also use CMP, dCMP and AMP. The chain is Uridylate kinase from Schizosaccharomyces pombe (strain 972 / ATCC 24843) (Fission yeast).